We begin with the raw amino-acid sequence, 431 residues long: Protein EARLY STARVATION 1, chloroplastic (431 aa).

A chloroplast-targeting transit peptide spans 1–19; that stretch reads MAACSRGLVARPFDLTARG. Disordered regions lie at residues 65–126 and 403–431; these read GNKP…DTGI and GVYP…SPLE. Residues 415–431 show a composition bias toward pro residues; sequence PAPPSDDPPGMPPSPLE.

It belongs to the ESV1 family.

It is found in the plastid. It localises to the chloroplast stroma. Its function is as follows. Binds preferentially to highly ordered alpha-glucans, such as starch and crystalline maltodextrins. Involved in the organization of the starch granule matrix, thus influencing starch turnover by modulating the accessibility of starch polymers to modifying and degrading enzymes. Required for the control of starch degradation in leaves and starch distribution in nonphotosynthetic parts. Promotes gravitropic responses, negative in shoots but positive in roots, by facilitating starch granules (statoliths) formation in hypocotyls and roots columella. Facilitates tight packing of starch granules in grains. This is Protein EARLY STARVATION 1, chloroplastic from Oryza sativa subsp. indica (Rice).